The sequence spans 231 residues: MTVLTDKIAVVTGAGSGIGEAIATLLHEEGAKVVLAGRNKDKLQNVANQLAQDSVKVVPTDVTNKEEVDELMKIAQQTFGGLDIVINSAGQMLSSKITDYQVDEWDSMIDVNIKGTLYTAQAALPTMLEQSSGHLINIASISGFEVTKSSTIYSATKAAVHTITQGLEKELAKTGVKVTSISPGMVDTAITAAYNPSDRKKLDPQDIAEAVLYALTQPKHVNVNEITVRPV.

10–34 (VVTGAGSGIGEAIATLLHEEGAKVV) lines the NADP(+) pocket. Substrate is bound at residue Ser-140. Tyr-153 serves as the catalytic Proton acceptor.

This sequence belongs to the short-chain dehydrogenases/reductases (SDR) family.

This is an uncharacterized protein from Staphylococcus aureus (strain N315).